Reading from the N-terminus, the 790-residue chain is LPS-assembly protein LptD (790 aa).

Residues 1–20 (MRMLRWLILSAFSVAGAVQA) form the signal peptide.

The protein belongs to the LptD family. Component of the lipopolysaccharide transport and assembly complex. Interacts with LptE and LptA.

The protein localises to the cell outer membrane. In terms of biological role, together with LptE, is involved in the assembly of lipopolysaccharide (LPS) at the surface of the outer membrane. The sequence is that of LPS-assembly protein LptD from Bordetella parapertussis (strain 12822 / ATCC BAA-587 / NCTC 13253).